Reading from the N-terminus, the 449-residue chain is Deoxyguanosinetriphosphate triphosphohydrolase-like protein (449 aa).

Residues 1-27 (MTSSVWQERRHGEDKQRRNDHRSPYQR) form a disordered region. The span at 7 to 27 (QERRHGEDKQRRNDHRSPYQR) shows a compositional bias: basic and acidic residues. In terms of domain architecture, HD spans 59–255 (RLTHSLEVSQ…MELADDIAYA (197 aa)).

It belongs to the dGTPase family. Type 2 subfamily.

The polypeptide is Deoxyguanosinetriphosphate triphosphohydrolase-like protein (Shewanella baltica (strain OS195)).